A 214-amino-acid chain; its full sequence is uncharacterized protein (214 aa).

The region spanning 2–118 (KIVIADDHHV…ELVKTRQVHG (117 aa)) is the Response regulatory domain. Residue Asp-53 is modified to 4-aspartylphosphate. In terms of domain architecture, HTH luxR-type spans 142–207 (EKEKYYQLTR…QAALFAVKYN (66 aa)). Residues 166–185 (NKEIAAALFISEKTVKTHVS) constitute a DNA-binding region (H-T-H motif).

Post-translationally, phosphorylated by YhcY.

The protein localises to the cytoplasm. Member of the two-component regulatory system YhcY/YhcZ. This is an uncharacterized protein from Bacillus subtilis (strain 168).